A 73-amino-acid chain; its full sequence is Small ribosomal subunit protein bS18B (73 aa).

Belongs to the bacterial ribosomal protein bS18 family. In terms of assembly, part of the 30S ribosomal subunit. Forms a tight heterodimer with protein bS6.

In terms of biological role, binds as a heterodimer with protein bS6 to the central domain of the 16S rRNA, where it helps stabilize the platform of the 30S subunit. This is Small ribosomal subunit protein bS18B from Frankia alni (strain DSM 45986 / CECT 9034 / ACN14a).